We begin with the raw amino-acid sequence, 1048 residues long: NACHT, LRR and PYD domains-containing protein 8 (1048 aa).

The tract at residues 1-23 (MSDVNPPSDTPIPFSSSSTHSSH) is disordered. Residues 11 to 23 (PIPFSSSSTHSSH) are compositionally biased toward low complexity. The region spanning 33 to 131 (PGSPCENGVM…NAILPTLEPE (99 aa)) is the Pyrin domain. Positions 204 to 527 (KTVAIQGAPG…FYVLCFPQRL (324 aa)) constitute an NACHT domain. Residue 210 to 217 (GAPGIGKT) participates in ATP binding. 5 LRR repeats span residues 815-838 (NGHLKTLILRKNSLENCGAYYLSV), 839-861 (AQLERLSIENCNLTQLTCESLAS), 866-890 (SKMLTHLSLAENALKDEGAKHIWNA), 923-950 (NKTLKSLDLSFNSLKDDGVILLCEALKN), and 980-1007 (NQHLRHLDLSKNAIGVYGILTLCEAFSS). Positions 1029-1048 (PTPHPPDFTGKSDCLSQINP) are disordered.

Belongs to the NLRP family.

Its subcellular location is the cytoplasm. In terms of biological role, involved in inflammation. The sequence is that of NACHT, LRR and PYD domains-containing protein 8 (NLRP8) from Homo sapiens (Human).